Reading from the N-terminus, the 354-residue chain is UDP-3-O-acylglucosamine N-acyltransferase (354 aa).

The active-site Proton acceptor is the H258.

This sequence belongs to the transferase hexapeptide repeat family. LpxD subfamily. As to quaternary structure, homotrimer.

The catalysed reaction is a UDP-3-O-[(3R)-3-hydroxyacyl]-alpha-D-glucosamine + a (3R)-hydroxyacyl-[ACP] = a UDP-2-N,3-O-bis[(3R)-3-hydroxyacyl]-alpha-D-glucosamine + holo-[ACP] + H(+). It functions in the pathway bacterial outer membrane biogenesis; LPS lipid A biosynthesis. In terms of biological role, catalyzes the N-acylation of UDP-3-O-acylglucosamine using 3-hydroxyacyl-ACP as the acyl donor. Is involved in the biosynthesis of lipid A, a phosphorylated glycolipid that anchors the lipopolysaccharide to the outer membrane of the cell. This Sinorhizobium medicae (strain WSM419) (Ensifer medicae) protein is UDP-3-O-acylglucosamine N-acyltransferase.